Here is a 176-residue protein sequence, read N- to C-terminus: Orotate phosphoribosyltransferase (176 aa).

Residues R90, K91, K94, and 116 to 124 contribute to the 5-phospho-alpha-D-ribose 1-diphosphate site; that span reads EDVTTTGGS. Residues T120 and R148 each coordinate orotate.

It belongs to the purine/pyrimidine phosphoribosyltransferase family. PyrE subfamily. As to quaternary structure, homodimer. Mg(2+) serves as cofactor.

It carries out the reaction orotidine 5'-phosphate + diphosphate = orotate + 5-phospho-alpha-D-ribose 1-diphosphate. The protein operates within pyrimidine metabolism; UMP biosynthesis via de novo pathway; UMP from orotate: step 1/2. In terms of biological role, catalyzes the transfer of a ribosyl phosphate group from 5-phosphoribose 1-diphosphate to orotate, leading to the formation of orotidine monophosphate (OMP). The protein is Orotate phosphoribosyltransferase of Methanocaldococcus jannaschii (strain ATCC 43067 / DSM 2661 / JAL-1 / JCM 10045 / NBRC 100440) (Methanococcus jannaschii).